The primary structure comprises 34 residues: Surfactant protein C (34 aa).

The S-palmitoyl cysteine moiety is linked to residue Cys4.

It is found in the secreted. The protein localises to the extracellular space. Its subcellular location is the surface film. Functionally, pulmonary surfactant associated proteins promote alveolar stability by lowering the surface tension at the air-liquid interface in the peripheral air spaces. The polypeptide is Surfactant protein C (SFTPC) (Canis lupus familiaris (Dog)).